We begin with the raw amino-acid sequence, 522 residues long: Maturase K (522 aa).

The protein belongs to the intron maturase 2 family. MatK subfamily.

The protein resides in the plastid. Its subcellular location is the chloroplast. Usually encoded in the trnK tRNA gene intron. Probably assists in splicing its own and other chloroplast group II introns. This Gladiolus papilio (Goldblotch gladiolus) protein is Maturase K.